The sequence spans 373 residues: Queuine tRNA-ribosyltransferase accessory subunit 2 (373 aa).

Zn(2+) contacts are provided by C320, C322, C325, and H351.

This sequence belongs to the queuine tRNA-ribosyltransferase family. QTRT2 subfamily. Heterodimer of a catalytic subunit and an accessory subunit. Zn(2+) serves as cofactor.

Its subcellular location is the cytoplasm. Functionally, non-catalytic subunit of the queuine tRNA-ribosyltransferase (TGT) that catalyzes the base-exchange of a guanine (G) residue with queuine (Q) at position 34 (anticodon wobble position) in tRNAs with GU(N) anticodons (tRNA-Asp, -Asn, -His and -Tyr), resulting in the hypermodified nucleoside queuosine (7-(((4,5-cis-dihydroxy-2-cyclopenten-1-yl)amino)methyl)-7-deazaguanosine). This chain is Queuine tRNA-ribosyltransferase accessory subunit 2, found in Caenorhabditis elegans.